A 173-amino-acid polypeptide reads, in one-letter code: Protein tyrosine phosphatase type IVA 3 (173 aa).

Positions 8–161 constitute a Tyrosine-protein phosphatase domain; it reads APVEVSYKHM…YRPKQRLRFK (154 aa). A disulfide bridge links C49 with C104. D72 functions as the Proton donor in the catalytic mechanism. C104 serves as the catalytic Phosphocysteine intermediate. Residue R110 participates in substrate binding. Position 170 is a cysteine methyl ester (C170). A lipid anchor (S-farnesyl cysteine) is attached at C170. Positions 171 to 173 are cleaved as a propeptide — removed in mature form; it reads CVM.

The protein belongs to the protein-tyrosine phosphatase family. Interacts with tubulin. Farnesylated. Farnesylation is required for membrane targeting. Mainly expressed in cardiomyocytes and skeletal muscle; also found in pancreas. Consistently overexpressed in colon cancer metastasis.

The protein resides in the cell membrane. The protein localises to the early endosome. It catalyses the reaction O-phospho-L-tyrosyl-[protein] + H2O = L-tyrosyl-[protein] + phosphate. With respect to regulation, inhibited by sodium orthovanadate and peroxovanadium compounds, and by pentamidine. Functionally, protein tyrosine phosphatase which stimulates progression from G1 into S phase during mitosis. Enhances cell proliferation, cell motility and invasive activity, and promotes cancer metastasis. May be involved in the progression of cardiac hypertrophy by inhibiting intracellular calcium mobilization in response to angiotensin II. This chain is Protein tyrosine phosphatase type IVA 3 (PTP4A3), found in Homo sapiens (Human).